A 149-amino-acid polypeptide reads, in one-letter code: Large ribosomal subunit protein bL9 (149 aa).

It belongs to the bacterial ribosomal protein bL9 family.

Functionally, binds to the 23S rRNA. In Leptospira borgpetersenii serovar Hardjo-bovis (strain JB197), this protein is Large ribosomal subunit protein bL9.